Reading from the N-terminus, the 446-residue chain is Radical S-adenosyl methionine domain-containing protein 1, mitochondrial (446 aa).

The region spanning 15–277 (KGYNKLKDLP…VCEAEAMGFQ (263 aa)) is the Radical SAM core domain. 3 residues coordinate [4Fe-4S] cluster: cysteine 34, cysteine 38, and cysteine 41. S-adenosyl-L-methionine-binding positions include glycine 94, 95–96 (GT), glutamate 130, glutamine 159, arginine 171, and aspartate 195.

It belongs to the anaerobic coproporphyrinogen-III oxidase family. HemW subfamily.

The protein resides in the mitochondrion. In terms of biological role, may be a heme chaperone, appears to bind heme. Homologous bacterial proteins do not have oxygen-independent coproporphyrinogen-III oxidase activity. Binds 1 [4Fe-4S] cluster. The cluster is coordinated with 3 cysteines and an exchangeable S-adenosyl-L-methionine. The chain is Radical S-adenosyl methionine domain-containing protein 1, mitochondrial (rsad1) from Dictyostelium discoideum (Social amoeba).